A 230-amino-acid chain; its full sequence is 2,3-bisphosphoglycerate-dependent phosphoglycerate mutase (230 aa).

Substrate is bound by residues 8-15 (RHGESEWN), 21-22 (TG), arginine 60, 87-90 (ERHY), lysine 98, 114-115 (RR), and 183-184 (GN). Histidine 9 (tele-phosphohistidine intermediate) is an active-site residue. The active-site Proton donor/acceptor is glutamate 87.

Belongs to the phosphoglycerate mutase family. BPG-dependent PGAM subfamily.

The catalysed reaction is (2R)-2-phosphoglycerate = (2R)-3-phosphoglycerate. Its pathway is carbohydrate degradation; glycolysis; pyruvate from D-glyceraldehyde 3-phosphate: step 3/5. In terms of biological role, catalyzes the interconversion of 2-phosphoglycerate and 3-phosphoglycerate. This chain is 2,3-bisphosphoglycerate-dependent phosphoglycerate mutase, found in Streptococcus gordonii (strain Challis / ATCC 35105 / BCRC 15272 / CH1 / DL1 / V288).